The following is a 251-amino-acid chain: Probable transcriptional regulatory protein cgR_1708 (251 aa).

Positions 1 to 22 (MAGHSKWATTKHKKAANDAKRG) are disordered.

This sequence belongs to the TACO1 family.

The protein resides in the cytoplasm. The polypeptide is Probable transcriptional regulatory protein cgR_1708 (Corynebacterium glutamicum (strain R)).